The sequence spans 633 residues: MKILDALLFPVIFIMFFIHLSIAQTDPELTIMTRLGQVQGTRLPVPDRSHVIAFLGIPFAEPPLGKMRFKPPEPKKPWNDVFDARDYPSACYQYVDTSYPGFSGTEMWNPNRMMSEDCLYLNVWVPATPRPHNLTVMVWIYGGGFYSGSSSLDVYDGRYLAHSEKVVVVSMNYRVSAFGFLALNGSAEAPGNVGLLDQRLALQWVQDNIHFFGGNPKQVTIFGESAGAASVGMHLLSPDSRPKFTRAILQSGVPNGPWRTVSFDEARRRAIKLGRLVGCPDGNDTDLIDCLRSKQPQDLIDQEWLVLPFSGLFRFSFVPVIDGVVFPDTPEAMLNSGNFKDTQILLGVNQNEGSYFLIYGAPGFSKDNESLITREDFLQGVKMSVPHANEIGLEAVILQYTDWMDEDNPIKNREAMDDIVGDHNVVCPLQHFAKMYAQYSILQGQTGTASQGNLGWGNSGSASNSGNSQVSVYLYMFDHRASNLVWPEWMGVIHGYEIEFVFGLPLEKRLNYTLEEEKLSRRMMKYWANFARTGNPNINVDGSIDSRRRWPVFTSTEQKHVGLNTDSLKVHKGLKSQFCALWNRFLPRLLNVTENIDDAERQWKAEFHRWSSYMMHWKNQFDHYSKQERCTNL.

Positions 1–23 are cleaved as a signal peptide; it reads MKILDALLFPVIFIMFFIHLSIA. The cysteines at positions 91 and 118 are disulfide-linked. 2 N-linked (GlcNAc...) asparagine glycosylation sites follow: Asn133 and Asn184. Ser225 acts as the Acyl-ester intermediate in catalysis. The cysteines at positions 279 and 290 are disulfide-linked. An N-linked (GlcNAc...) asparagine glycan is attached at Asn283. Glu352 (charge relay system) is an active-site residue. A glycan (N-linked (GlcNAc...) asparagine) is linked at Asn368. A disulfide bridge connects residues Cys427 and Cys579. The active-site Charge relay system is the His494. N-linked (GlcNAc...) asparagine glycans are attached at residues Asn511 and Asn591.

The protein belongs to the type-B carboxylesterase/lipase family.

Its subcellular location is the synapse. It is found in the secreted. The protein resides in the cell membrane. It catalyses the reaction acetylcholine + H2O = choline + acetate + H(+). Its function is as follows. Terminates signal transduction at the neuromuscular junction by rapid hydrolysis of the acetylcholine released into the synaptic cleft. The sequence is that of Acetylcholinesterase (ache) from Electrophorus electricus (Electric eel).